A 312-amino-acid chain; its full sequence is Ribonuclease Z (312 aa).

Residues His-63, His-65, Asp-67, His-68, His-141, Asp-212, and His-270 each coordinate Zn(2+). Asp-67 (proton acceptor) is an active-site residue.

The protein belongs to the RNase Z family. Homodimer. Requires Zn(2+) as cofactor.

The enzyme catalyses Endonucleolytic cleavage of RNA, removing extra 3' nucleotides from tRNA precursor, generating 3' termini of tRNAs. A 3'-hydroxy group is left at the tRNA terminus and a 5'-phosphoryl group is left at the trailer molecule.. Functionally, zinc phosphodiesterase, which displays some tRNA 3'-processing endonuclease activity. Probably involved in tRNA maturation, by removing a 3'-trailer from precursor tRNA. The protein is Ribonuclease Z of Lactobacillus helveticus (strain DPC 4571).